The primary structure comprises 209 residues: Large ribosomal subunit protein uL3 (209 aa).

N5-methylglutamine is present on Gln150.

Belongs to the universal ribosomal protein uL3 family. As to quaternary structure, part of the 50S ribosomal subunit. Forms a cluster with proteins L14 and L19. Methylated by PrmB.

Its function is as follows. One of the primary rRNA binding proteins, it binds directly near the 3'-end of the 23S rRNA, where it nucleates assembly of the 50S subunit. This Pasteurella multocida (strain Pm70) protein is Large ribosomal subunit protein uL3.